Consider the following 644-residue polypeptide: Macrolide export ATP-binding/permease protein MacB (644 aa).

Residues Ile-7–Arg-245 enclose the ABC transporter domain. Position 43–50 (Gly-43–Ser-50) interacts with ATP. 4 helical membrane passes run Ala-271–Gly-291, Ile-526–Val-546, Phe-570–Ile-590, and Leu-607–Leu-627.

This sequence belongs to the ABC transporter superfamily. Macrolide exporter (TC 3.A.1.122) family. As to quaternary structure, homodimer. Part of the tripartite efflux system MacAB-TolC, which is composed of an inner membrane transporter, MacB, a periplasmic membrane fusion protein, MacA, and an outer membrane component, TolC. The complex forms a large protein conduit and can translocate molecules across both the inner and outer membranes. Interacts with MacA.

The protein localises to the cell inner membrane. In terms of biological role, part of the tripartite efflux system MacAB-TolC. MacB is a non-canonical ABC transporter that contains transmembrane domains (TMD), which form a pore in the inner membrane, and an ATP-binding domain (NBD), which is responsible for energy generation. Confers resistance against macrolides. The protein is Macrolide export ATP-binding/permease protein MacB of Marinobacter nauticus (strain ATCC 700491 / DSM 11845 / VT8) (Marinobacter aquaeolei).